Reading from the N-terminus, the 337-residue chain is Ribonucleoside-diphosphate reductase small subunit (337 aa).

The segment at 1 to 22 is disordered; that stretch reads MDPAVSPASTDPLDTHASGAGA. Asp91, Glu121, and His124 together coordinate Fe cation. Residue Tyr128 is part of the active site. Residues 177 to 197 form a helical membrane-spanning segment; that stretch reads FILMILIEGVFFAASFAAIAY. The Fe cation site is built by Glu184, Glu218, and His221.

The protein belongs to the ribonucleoside diphosphate reductase small chain family. Heterotetramer composed of a homodimer of the large subunit (R1) and a homodimer of the small subunit (R2). Larger multisubunit protein complex are also active, composed of (R1)n(R2)n. The cofactor is Fe cation.

It is found in the host membrane. It carries out the reaction a 2'-deoxyribonucleoside 5'-diphosphate + [thioredoxin]-disulfide + H2O = a ribonucleoside 5'-diphosphate + [thioredoxin]-dithiol. Its function is as follows. Ribonucleoside-diphosphate reductase holoenzyme provides the precursors necessary for viral DNA synthesis. Allows virus growth in non-dividing cells, as well as reactivation from latency in infected hosts. Catalyzes the biosynthesis of deoxyribonucleotides from the corresponding ribonucleotides. In Human herpesvirus 2 (strain 333) (HHV-2), this protein is Ribonucleoside-diphosphate reductase small subunit.